We begin with the raw amino-acid sequence, 64 residues long: Large ribosomal subunit protein bL35 (64 aa).

The disordered stretch occupies residues 1–23; sequence MPKMKTKSGAAKRFKKTANGFKH.

The protein belongs to the bacterial ribosomal protein bL35 family.

This is Large ribosomal subunit protein bL35 from Stutzerimonas stutzeri (strain A1501) (Pseudomonas stutzeri).